Here is a 151-residue protein sequence, read N- to C-terminus: MAVQLFFTEEQRKVFKSSFKSIDADGDGKITPEELKAAFKSIEIELTQEKIDEMMSMVDKDGSRPVDFSEILMKKAEQMRGKGAQYFKAFDALDTDKSGSLSPEELRTALSACTDPPMTKEEIDAIIKKADGNNDGEIRRAEFVRMIQSSY.

4 consecutive EF-hand domains span residues 10-45, 46-78, 81-116, and 118-151; these read EQRK…IEIE, LTQE…KAEQ, GKGA…CTDP, and MTKE…QSSY. 18 residues coordinate Ca(2+): D23, D25, D27, K29, E34, D59, D61, S63, E70, D94, D96, S98, S100, E105, D131, D135, E137, and E142.

As to expression, found in cell lineages giving rise to the aboral ectoderm, a squamous epithelium covering the surface of the late stage embryo and larva.

Calcium-binding protein involved in larval development and metamorphosis. Likely to function as calcium buffers mediating the transport of calcium from the sea water to the blastocoel where calcium is required for skeleton formation. The polypeptide is Calcium-binding protein SPEC 2C (SPEC2C) (Strongylocentrotus purpuratus (Purple sea urchin)).